Here is a 239-residue protein sequence, read N- to C-terminus: Ribonuclease 3 (239 aa).

The RNase III domain occupies 11-133 (HAAIQKKLGY…MFAAVSFDAD (123 aa)). A Mg(2+)-binding site is contributed by Glu46. The active site involves Asp50. The Mg(2+) site is built by Asp119 and Glu122. Glu122 is a catalytic residue. In terms of domain architecture, DRBM spans 160–230 (DGKTALQEAL…AKEALKWLEE (71 aa)).

It belongs to the ribonuclease III family. Homodimer. Mg(2+) serves as cofactor.

The protein localises to the cytoplasm. The catalysed reaction is Endonucleolytic cleavage to 5'-phosphomonoester.. In terms of biological role, digests double-stranded RNA. Involved in the processing of primary rRNA transcript to yield the immediate precursors to the large and small rRNAs (23S and 16S). Also processes some mRNAs, and tRNAs when they are encoded in the rRNA operon. Functionally, CRISPR (clustered regularly interspaced short palindromic repeat) is an adaptive immune system that provides protection against mobile genetic elements (viruses, transposable elements and conjugative plasmids). CRISPR clusters contain spacers, sequences complementary to antecedent mobile elements, and target invading nucleic acids. CRISPR clusters are transcribed and processed into CRISPR RNA (crRNA). In this organism endogenous ribonuclease 3 and Cas9 are required for correct coprocessing of pre-crRNA and the trans-encoded small RNA (tracrRNA). Cas9, crRNA and tracrRNA are required for cleavage of invading DNA. Complements pre-crRNA and tracrRNA coprocessing defects in an rnc deletion in S.pyogenes strain 370. The protein is Ribonuclease 3 of Neisseria meningitidis serogroup A / serotype 4A (strain DSM 15465 / Z2491).